The primary structure comprises 136 residues: MGEILELTNKNFMSHLKKDITSQESLKSRIEDKNGDVASPKEDNYPLLNETAAWPDGVITSEEGCSSSGEKENSGLCSEESSEEDPEEAEEESARAFGELVAVLRDKDIPLNVLDEPQMKDWLEKYTGVYRSSWHG.

2 disordered regions span residues 23–44 (QESLKSRIEDKNGDVASPKEDN) and 56–95 (DGVITSEEGCSSSGEKENSGLCSEESSEEDPEEAEEESAR). The span at 61 to 79 (SEEGCSSSGEKENSGLCSE) shows a compositional bias: low complexity. Positions 80–91 (ESSEEDPEEAEE) are enriched in acidic residues.

This is an uncharacterized protein from Saccharomyces cerevisiae (strain ATCC 204508 / S288c) (Baker's yeast).